Reading from the N-terminus, the 784-residue chain is Toll-like receptor 2 (784 aa).

The signal sequence occupies residues 1-20; sequence MPHTLWMVWVLGVIISLSKE. Residues 21 to 587 are Extracellular-facing; the sequence is ESSNQASLSC…VRLSVSECHR (567 aa). A disulfide bridge connects residues C30 and C36. 19 LRR repeats span residues 54-77, 78-101, 102-125, 126-150, 151-175, 176-199, 200-223, 224-250, 251-278, 279-308, 309-337, 338-361, 362-388, 389-414, 415-437, 438-457, 458-478, 479-500, and 501-524; these read VKSLDLSNNRITYISNSDLQRCVN, LQALVLTSNGINTIEEDSFSSLGS, LEHLDLSYNYLSNLSSSWFKPLSS, LTFLNLLGNPYKTLGETSLFSHLTK, LQILRVGNMDTFTKIQRKDFAGLTF, LEELEIDASDLQSYEPKSLKSIQN, VSHLILHMKQHILLLEIFVDVTSS, VECLELRDTDLDTFRFSELSTGETNSL, IKKFTFRNVKITDESLFQVMKLLNQISG, LLELEFDDCTLNGVGNFRASDNDRVIDPGK, VETLTIRRLHIPRFYLFYDLSTLYSLTER, VKRITVENSKVFLVPCLLSQHLKS, LEYLDLSENLIVEEYLKNSACEDAWPS, LQTLILRQNHLASLEKTGETLLTLKN, LTNVDISKNSFHSMPETCQWPEK, MKYLNLSSTRIHSVTGCIPK, TLEILDVSNNNLNLFSLNLPQ, LKELYISRNKLMTLPDASLLPM, and LLVLKISRNAITTFSKEQLDSFHT. N114 carries N-linked (GlcNAc...) asparagine glycosylation. An N-linked (GlcNAc...) asparagine glycan is attached at N199. A disulfide bridge connects residues C353 and C382. Residue N414 is glycosylated (N-linked (GlcNAc...) asparagine). C432 and C454 are disulfide-bonded. N-linked (GlcNAc...) asparagine glycosylation occurs at N442. The 55-residue stretch at 525–579 folds into the LRRCT domain; that stretch reads LKTLEAGGNNFICSCEFLSFTQEQQALAKVLIDWPANYLCDSPSHVRGQQVQDVR. A helical membrane pass occupies residues 588–608; sequence TALVSGMCCALFLLILLTGVL. Residues 609-784 lie on the Cytoplasmic side of the membrane; sequence CHRFHGLWYM…WVNLRAAIKS (176 aa). A TIR domain is found at 639–782; the sequence is ICYDAFVSYS…GFWVNLRAAI (144 aa). K754 participates in a covalent cross-link: Glycyl lysine isopeptide (Lys-Gly) (interchain with G-Cter in ubiquitin). The ATG16L1-binding motif motif lies at 761–778; the sequence is YLEWPMDEAQREGFWVNL.

It belongs to the Toll-like receptor family. In terms of assembly, interacts with LY96, TLR1 and TLR6 (via extracellular domain). TLR2 seems to exist in heterodimers with either TLR1 or TLR6 before stimulation by the ligand. The heterodimers form bigger oligomers in response to their corresponding ligands as well as further heterotypic associations with other receptors such as CD14 and/or CD36. Binds MYD88 (via TIR domain). Interacts with TICAM1. Interacts with CNPY3. Interacts with ATG16L1. Interacts with PPP1R11. Interacts with TICAM2. Interacts with TIRAP. Ubiquitinated at Lys-754 by PPP1R11, leading to its degradation. Deubiquitinated by USP2. Post-translationally, glycosylation of Asn-442 is critical for secretion of the N-terminal ectodomain of TLR2.

The protein resides in the membrane. It localises to the cytoplasmic vesicle. The protein localises to the phagosome membrane. Its subcellular location is the membrane raft. Functionally, cooperates with LY96 to mediate the innate immune response to bacterial lipoproteins and other microbial cell wall components. Cooperates with TLR1 or TLR6 to mediate the innate immune response to bacterial lipoproteins or lipopeptides. Acts via MYD88 and TRAF6, leading to NF-kappa-B activation, cytokine secretion and the inflammatory response. May also promote apoptosis in response to lipoproteins. Forms activation clusters composed of several receptors depending on the ligand, these clusters trigger signaling from the cell surface and subsequently are targeted to the Golgi in a lipid-raft dependent pathway. Forms the cluster TLR2:TLR6:CD14:CD36 in response to diacylated lipopeptides and TLR2:TLR1:CD14 in response to triacylated lipopeptides. The sequence is that of Toll-like receptor 2 (TLR2) from Pan troglodytes (Chimpanzee).